Reading from the N-terminus, the 75-residue chain is Sec-independent protein translocase protein TatA (75 aa).

The helical transmembrane segment at 1 to 21 threads the bilayer; it reads MGSFSIWHWLVVLAIVLLVFG. Positions 40-75 are disordered; sequence KKGMRDEDKPNAQLGDESRSQDASRTAQDEHDRTPR.

It belongs to the TatA/E family. As to quaternary structure, the Tat system comprises two distinct complexes: a TatABC complex, containing multiple copies of TatA, TatB and TatC subunits, and a separate TatA complex, containing only TatA subunits. Substrates initially bind to the TatABC complex, which probably triggers association of the separate TatA complex to form the active translocon.

It localises to the cell inner membrane. Its function is as follows. Part of the twin-arginine translocation (Tat) system that transports large folded proteins containing a characteristic twin-arginine motif in their signal peptide across membranes. TatA could form the protein-conducting channel of the Tat system. The sequence is that of Sec-independent protein translocase protein TatA from Stenotrophomonas maltophilia (strain R551-3).